We begin with the raw amino-acid sequence, 361 residues long: Nicotinate-nucleotide--dimethylbenzimidazole phosphoribosyltransferase (361 aa).

Glu-320 acts as the Proton acceptor in catalysis.

Belongs to the CobT family. As to quaternary structure, homodimer.

It catalyses the reaction 5,6-dimethylbenzimidazole + nicotinate beta-D-ribonucleotide = alpha-ribazole 5'-phosphate + nicotinate + H(+). It participates in nucleoside biosynthesis; alpha-ribazole biosynthesis; alpha-ribazole from 5,6-dimethylbenzimidazole: step 1/2. Catalyzes the synthesis of alpha-ribazole-5'-phosphate from nicotinate mononucleotide (NAMN) and 5,6-dimethylbenzimidazole (DMB). The sequence is that of Nicotinate-nucleotide--dimethylbenzimidazole phosphoribosyltransferase from Shigella boydii serotype 18 (strain CDC 3083-94 / BS512).